Consider the following 348-residue polypeptide: Ion-translocating oxidoreductase complex subunit D (348 aa).

Transmembrane regions (helical) follow at residues 15–35, 36–56, 67–87, 88–108, and 125–145; these read LTAK…GMQA, YFFG…AVAI, PTAF…LAIS, IPPY…LLLA, and VAYA…LVPI. Residue threonine 186 is modified to FMN phosphoryl threonine. A run of 5 helical transmembrane segments spans residues 212 to 232, 241 to 261, 265 to 285, 298 to 318, and 320 to 340; these read LFAN…LLLI, IPAA…LLLP, LNVV…FIAT, LIFG…GNYP, and AVAF…HYTQ.

Belongs to the NqrB/RnfD family. The complex is composed of six subunits: RnfA, RnfB, RnfC, RnfD, RnfE and RnfG. FMN is required as a cofactor.

Its subcellular location is the cell inner membrane. Functionally, part of a membrane-bound complex that couples electron transfer with translocation of ions across the membrane. The chain is Ion-translocating oxidoreductase complex subunit D from Actinobacillus pleuropneumoniae serotype 5b (strain L20).